Consider the following 62-residue polypeptide: Dual specificity mitogen-activated protein kinase kinase 3 (62 aa).

A Protein kinase domain is found at 1–62 (GKIAVSIVKA…VAKTMDAGCK (62 aa)).

This sequence belongs to the protein kinase superfamily. STE Ser/Thr protein kinase family. MAP kinase kinase subfamily. In terms of processing, activated by phosphorylation on Ser/Thr catalyzed by MAP kinase kinase kinases.

The catalysed reaction is L-seryl-[protein] + ATP = O-phospho-L-seryl-[protein] + ADP + H(+). It carries out the reaction L-threonyl-[protein] + ATP = O-phospho-L-threonyl-[protein] + ADP + H(+). It catalyses the reaction L-tyrosyl-[protein] + ATP = O-phospho-L-tyrosyl-[protein] + ADP + H(+). Functionally, catalyzes the concomitant phosphorylation of a threonine and a tyrosine residue in a Thr-Glu-Tyr sequence located in MAP kinases. The sequence is that of Dual specificity mitogen-activated protein kinase kinase 3 (map2k3) from Xenopus laevis (African clawed frog).